Consider the following 458-residue polypeptide: tRNA modification GTPase MnmE (458 aa).

(6S)-5-formyl-5,6,7,8-tetrahydrofolate is bound by residues Arg-22, Glu-86, and Arg-125. One can recognise a TrmE-type G domain in the interval 221–379 (GIRTVILGRP…LEQTITEMFF (159 aa)). Asn-231 provides a ligand contact to K(+). GTP-binding positions include 231–236 (NAGKSS), 250–256 (TEIAGTT), and 275–278 (DTAG). Ser-235 contacts Mg(2+). 3 residues coordinate K(+): Thr-250, Ile-252, and Thr-255. Thr-256 provides a ligand contact to Mg(2+). A (6S)-5-formyl-5,6,7,8-tetrahydrofolate-binding site is contributed by Lys-458.

The protein belongs to the TRAFAC class TrmE-Era-EngA-EngB-Septin-like GTPase superfamily. TrmE GTPase family. As to quaternary structure, homodimer. Heterotetramer of two MnmE and two MnmG subunits. Requires K(+) as cofactor.

Its subcellular location is the cytoplasm. Its function is as follows. Exhibits a very high intrinsic GTPase hydrolysis rate. Involved in the addition of a carboxymethylaminomethyl (cmnm) group at the wobble position (U34) of certain tRNAs, forming tRNA-cmnm(5)s(2)U34. This is tRNA modification GTPase MnmE from Lachnoclostridium phytofermentans (strain ATCC 700394 / DSM 18823 / ISDg) (Clostridium phytofermentans).